A 292-amino-acid chain; its full sequence is HTH-type transcriptional activator IlvY (292 aa).

One can recognise an HTH lysR-type domain in the interval 1 to 58; the sequence is MEFTDLQIFIHLSDTKNFTKTATQNHMSPSTLSRQIQRLEDELGKTLFIRDNRQVKLT. A DNA-binding region (H-T-H motif) is located at residues 18-37; sequence FTKTATQNHMSPSTLSRQIQ.

This sequence belongs to the LysR transcriptional regulatory family.

The protein localises to the cytoplasm. In terms of biological role, this protein activates the transcription of the ilvC gene in the presence of acetolactate or acetohydroxybutyrate. IlvY is also a negative regulator of its own expression. The chain is HTH-type transcriptional activator IlvY (ilvY) from Haemophilus influenzae (strain ATCC 51907 / DSM 11121 / KW20 / Rd).